The following is a 336-amino-acid chain: Flavonoid 4'-O-methyltransferase 3 (336 aa).

The S-adenosyl-L-methionine site is built by Tyr-140 and Asp-203. His-241 (proton acceptor) is an active-site residue.

It belongs to the class I-like SAM-binding methyltransferase superfamily. Cation-independent O-methyltransferase family. As to quaternary structure, homodimer. In terms of tissue distribution, expressed in leaves.

It catalyses the reaction scutellarein 7-methyl ether + S-adenosyl-L-methionine = ladanein + S-adenosyl-L-homocysteine + H(+). It carries out the reaction cirsimaritin + S-adenosyl-L-methionine = salvigenin + S-adenosyl-L-homocysteine + H(+). The catalysed reaction is cirsiliol + S-adenosyl-L-methionine = eupatorin + S-adenosyl-L-homocysteine + H(+). The enzyme catalyses genkwanin + S-adenosyl-L-methionine = apigenin 4',7-dimethyl ether + S-adenosyl-L-homocysteine. The protein operates within flavonoid metabolism. With respect to regulation, substrate inhibition by genkwanin (GENK) at concentrations above 2.5 mM. Functionally, flavonoid 4'-O-methyltransferase involved in the biosynthesis of polymethoxylated flavonoids natural products such as nevadensin and salvigenin, aroma compounds which contribute to the flavor of sweet basil, and exhibit pharmacological activities such as anti-allergic, anti-oxidant, antibacterial, anti-proliferative, and anti-inflammatory effects. Catalyzes S-adenosylmethionine-dependent regioselective 4'-O-methylation of flavonoids; active on various hydroxylated flavonoid substrates, including scutellarein-7-methyl ether (SCU7Me) and cirsimaritin (CIRM), and, with a lower efficiency, hispidulin, ladanein (LAD), cirsioliol (CIRL) and genkwanin (GENK). The protein is Flavonoid 4'-O-methyltransferase 3 of Ocimum basilicum (Sweet basil).